The sequence spans 361 residues: DNA replication and repair protein RecF (361 aa).

30–37 (GANGSGKT) provides a ligand contact to ATP.

Belongs to the RecF family.

The protein localises to the cytoplasm. The RecF protein is involved in DNA metabolism; it is required for DNA replication and normal SOS inducibility. RecF binds preferentially to single-stranded, linear DNA. It also seems to bind ATP. The chain is DNA replication and repair protein RecF from Pectobacterium atrosepticum (strain SCRI 1043 / ATCC BAA-672) (Erwinia carotovora subsp. atroseptica).